Consider the following 341-residue polypeptide: uncharacterized protein (341 aa).

The next 3 helical transmembrane spans lie at I6 to W26, L63 to I83, and A137 to V157.

It localises to the cell membrane. This is an uncharacterized protein from Bacillus subtilis (strain 168).